A 297-amino-acid polypeptide reads, in one-letter code: ATP synthase gamma chain (297 aa).

It belongs to the ATPase gamma chain family. As to quaternary structure, F-type ATPases have 2 components, CF(1) - the catalytic core - and CF(0) - the membrane proton channel. CF(1) has five subunits: alpha(3), beta(3), gamma(1), delta(1), epsilon(1). CF(0) has three main subunits: a, b and c.

It localises to the cell membrane. Produces ATP from ADP in the presence of a proton gradient across the membrane. The gamma chain is believed to be important in regulating ATPase activity and the flow of protons through the CF(0) complex. This is ATP synthase gamma chain from Arthrobacter sp. (strain FB24).